The chain runs to 484 residues: MLHQLTLAEIARALADKQFSAEELTRTLLGRIRQLDPQLNSFISITDDLAIAQAKAADERRANGENGALLGAPIAHKDLFCTQGVRTSCGSKMLDNFVSPYDATVVEKLTAAGAVTLGKLNMDEFAMGSSNQSSHYGAVKNPWSLDRVPGGSSGGSAAAVAARLLPAATGTDTGGSIRQPAALTNLTGIKPTYGRVSRWGMIAYASSLDQGGPLARTAEDCALMLGVMAGFDPKDSTSVEQPVDDYLAALQKPLSGLRIGLPREYFGAGLDSRIADAVLAVVEELKTLGATVKDISLPNMQHAIPAYYVIAPAEASSNLSRFDGVRYGYRCDAPQNLEDLYKRSRAEGFGSEVKNRIMVGTYALSAGYYDAYYLQAQKIRRLIKNDFVSAFAEVDVILGPTTPNPAWKIGEKNDDPVSQYLEDIYTITANLAGLPGLSMPAGFVDGLPVGVQLLAPYFQEGRLLNVAHQYQQVSDWHTRTPAGF.

Active-site charge relay system residues include Lys77 and Ser152. The Acyl-ester intermediate role is filled by Ser176.

It belongs to the amidase family. GatA subfamily. In terms of assembly, heterotrimer of A, B and C subunits.

It carries out the reaction L-glutamyl-tRNA(Gln) + L-glutamine + ATP + H2O = L-glutaminyl-tRNA(Gln) + L-glutamate + ADP + phosphate + H(+). Allows the formation of correctly charged Gln-tRNA(Gln) through the transamidation of misacylated Glu-tRNA(Gln) in organisms which lack glutaminyl-tRNA synthetase. The reaction takes place in the presence of glutamine and ATP through an activated gamma-phospho-Glu-tRNA(Gln). In Pseudomonas aeruginosa (strain ATCC 15692 / DSM 22644 / CIP 104116 / JCM 14847 / LMG 12228 / 1C / PRS 101 / PAO1), this protein is Glutamyl-tRNA(Gln) amidotransferase subunit A.